Here is a 122-residue protein sequence, read N- to C-terminus: UPF0102 protein BARBAKC583_1042 (122 aa).

The protein belongs to the UPF0102 family.

The protein is UPF0102 protein BARBAKC583_1042 of Bartonella bacilliformis (strain ATCC 35685 / KC583 / Herrer 020/F12,63).